Reading from the N-terminus, the 270-residue chain is 4-hydroxy-tetrahydrodipicolinate reductase (270 aa).

NAD(+)-binding positions include 9-14 (GAGGRM) and glutamate 35. An NADP(+)-binding site is contributed by arginine 36. NAD(+) contacts are provided by residues 99–101 (GTT) and 123–126 (ASNY). The Proton donor/acceptor role is filled by histidine 156. Histidine 157 is a binding site for (S)-2,3,4,5-tetrahydrodipicolinate. The active-site Proton donor is the lysine 160. 166–167 (GT) is a (S)-2,3,4,5-tetrahydrodipicolinate binding site.

It belongs to the DapB family.

It is found in the cytoplasm. It carries out the reaction (S)-2,3,4,5-tetrahydrodipicolinate + NAD(+) + H2O = (2S,4S)-4-hydroxy-2,3,4,5-tetrahydrodipicolinate + NADH + H(+). It catalyses the reaction (S)-2,3,4,5-tetrahydrodipicolinate + NADP(+) + H2O = (2S,4S)-4-hydroxy-2,3,4,5-tetrahydrodipicolinate + NADPH + H(+). It functions in the pathway amino-acid biosynthesis; L-lysine biosynthesis via DAP pathway; (S)-tetrahydrodipicolinate from L-aspartate: step 4/4. Functionally, catalyzes the conversion of 4-hydroxy-tetrahydrodipicolinate (HTPA) to tetrahydrodipicolinate. The protein is 4-hydroxy-tetrahydrodipicolinate reductase of Histophilus somni (strain 129Pt) (Haemophilus somnus).